A 296-amino-acid polypeptide reads, in one-letter code: uncharacterized protein (296 aa).

The first 20 residues, 1–20 (MRKFIFVLLTLLLVSPFSFA), serve as a signal peptide directing secretion.

This is an uncharacterized protein from Escherichia coli (strain K12).